The sequence spans 236 residues: H2HPP isomerase (236 aa).

Cupin type-2 domains lie at 40–106 (YVPP…AIDI) and 151–215 (NIPG…SKSV). Positions 50, 52, 56, 91, 162, 164, 168, and 202 each coordinate a divalent metal cation. Y223 is a substrate binding site.

As to quaternary structure, monomer. Fe(2+) is required as a cofactor. It depends on Co(2+) as a cofactor.

It localises to the cytoplasm. It carries out the reaction 3-[(4R)-4-hydroxycyclohexa-1,5-dien-1-yl]-2-oxopropanoate = 3-[(1E,4R)-4-hydroxycyclohex-2-en-1-ylidene]pyruvate. It participates in antibiotic biosynthesis; bacilysin biosynthesis. Functionally, part of the bacABCDEF operon responsible for the biosynthesis of the nonribosomally synthesized dipeptide antibiotic bacilysin, composed of L-alanine and L-anticapsin. Bacilysin is an irreversible inactivator of the glutaminase domain of glucosamine synthetase. BacB catalyzes the allylic isomerization of the endocyclic-delta(4),delta(8)-7R-dihydro-hydroxyphenylpyruvate (en-H2HPP) to generate a mixture of 3E,7R- and 3Z, 7R-olefins of the exocyclic-delta(3),delta(5)-dihydro-hydroxyphenylpyruvate (ex-H2HPP). This chain is H2HPP isomerase, found in Bacillus amyloliquefaciens (Bacillus velezensis).